The primary structure comprises 851 residues: MIQQKVLFISLVAVALGLGLGLGLKESVEPQVSCRYRCNETFSKMASGCSCDDKCTERQACCQDYEDTCVLPTQSWSCSKLRCSEKRMANVLCSCSEDCLEKKDCCTDYKSICKGETSWLKDQCASSSAAQCPSGFEQSPLILFSMDGFRAGYLETWDSLMPNINKLKTCGTHAKYMRAVYPTKTFVNHYTIVTGLYPESHGIIDNNIYDVTLNLNFSLSAPTMTNPAWWGGQPIWHTVTYQGLKAATYFWPGSEVKINGSYPTIYKVYNKSIPFEARVTEVLKWLDLPKAERPDFVTLYIEEPDTTGHKFGPVSGEIIMALQMADRTLGMLMEGLKQRNLHNCVNLILLADHGMEQISCNRLEYMTDYFDKVDFFMYEGPAPRIRSKNVPKDFYTFDSEGIVRNLTCQKPKQYFKAYLAKDLPKRLHYVNNIRIDKVNLMVDQQWMAVRNKNYNRCNGGTHGYDNEFKSMQAIFLAHGPGFKGKNEVTSFENIEVYNLMCDLLKLKPAPNNGTHGSLNHLLKNPFYNPSPAKEQTSPLSCPFGPVPSPDVSGCKCSSITDLGKVNERLNLNNQAKTESEAHNLPYGRPQVLQNHSKYCLLHQAKYISAYSQDVLMPLWSSYTINKSPPTSVPPSASDCLRLDVRIPAAQSQTCSNYQPDLTITPGFLYPPNFGSSNFEQYDALITSNLVPMFKGFTRLWNYFHGTLLPKYARERNGLNVISGPIFDYNYDGHFDSYDTIKEYVNDTKIPIPTHFFVVLTSCENQINTPLNCPGSLKVLSFILPHRPDNSESCADTSPDNLWVEERIQTHTARVRDVELLTGLNFYSGLKQPLPETLQLKTFLPIFVNPVN.

An N-terminal signal peptide occupies residues 1–23; that stretch reads MIQQKVLFISLVAVALGLGLGLG. 2 consecutive SMB domains span residues 30 to 73 and 74 to 118; these read PQVS…VLPT and QSWS…GETS. Disulfide bonds link Cys-34-Cys-38, Cys-34-Cys-51, Cys-38-Cys-69, Cys-49-Cys-51, Cys-49-Cys-62, Cys-55-Cys-61, Cys-62-Cys-69, Cys-78-Cys-83, Cys-78-Cys-95, Cys-83-Cys-113, Cys-93-Cys-95, Cys-93-Cys-106, Cys-99-Cys-105, Cys-106-Cys-113, Cys-124-Cys-170, and Cys-132-Cys-344. The N-linked (GlcNAc...) asparagine glycan is linked to Asn-39. The Cell attachment site motif lies at 58–60; it reads RQA. Residues Asp-147 and Thr-185 each contribute to the a divalent metal cation site. Thr-185 serves as the catalytic AMP-threonine intermediate. Residues Asn-216, Asn-259, and Asn-270 are each glycosylated (N-linked (GlcNAc...) asparagine). Lys-271 serves as a coordination point for AMP. A divalent metal cation-binding residues include Asp-305, His-309, Asp-352, and His-353. Residue His-309 participates in AMP binding. 6 disulfides stabilise this stretch: Cys-360–Cys-457, Cys-408–Cys-793, Cys-541–Cys-599, Cys-554–Cys-654, Cys-556–Cys-639, and Cys-762–Cys-772. Residue Asn-405 is glycosylated (N-linked (GlcNAc...) asparagine). Position 462 (His-462) interacts with a divalent metal cation. N-linked (GlcNAc...) asparagine glycosylation is found at Asn-512, Asn-594, and Asn-745.

This sequence belongs to the nucleotide pyrophosphatase/phosphodiesterase family. In terms of assembly, monomer cleaved in two subunits; disulfide-linked. Is synthesized as a single-chain protein and is subsequently cleaved to form a two-subunit protein held together with disulfide bonds. A divalent metal cation is required as a cofactor. As to expression, expressed by venom gland.

It is found in the secreted. It catalyses the reaction ADP + H2O = AMP + phosphate + H(+). In terms of biological role, hydrolyzes ADP with high activity. Shows weak or no activity on 5'-AMP, 5'-GMP, 3'-AMP, ATP, cAMP, and cGMP. Is devoid of monophosphatase and proteinase activities. Dose-dependently inhibits platelet aggregation induced by ADP (IC(50)=0.99 uM) and collagen (IC(50)=1.4 uM). This is Venom phosphodiesterase from Macrovipera lebetinus (Levantine viper).